A 464-amino-acid chain; its full sequence is Light-independent protochlorophyllide reductase subunit N (464 aa).

Cys29, Cys54, and Cys114 together coordinate [4Fe-4S] cluster.

The protein belongs to the BchN/ChlN family. Protochlorophyllide reductase is composed of three subunits; ChlL, ChlN and ChlB. Forms a heterotetramer of two ChlB and two ChlN subunits. The cofactor is [4Fe-4S] cluster.

It is found in the plastid. The protein localises to the chloroplast. It carries out the reaction chlorophyllide a + oxidized 2[4Fe-4S]-[ferredoxin] + 2 ADP + 2 phosphate = protochlorophyllide a + reduced 2[4Fe-4S]-[ferredoxin] + 2 ATP + 2 H2O. It participates in porphyrin-containing compound metabolism; chlorophyll biosynthesis (light-independent). Functionally, component of the dark-operative protochlorophyllide reductase (DPOR) that uses Mg-ATP and reduced ferredoxin to reduce ring D of protochlorophyllide (Pchlide) to form chlorophyllide a (Chlide). This reaction is light-independent. The NB-protein (ChlN-ChlB) is the catalytic component of the complex. The polypeptide is Light-independent protochlorophyllide reductase subunit N (Stigeoclonium helveticum (Green alga)).